A 379-amino-acid chain; its full sequence is ATP-sensitive inward rectifier potassium channel 10 (379 aa).

The Cytoplasmic portion of the chain corresponds to 1-61 (MTSVAKVYYS…LKDLWTTFID (61 aa)). 1,2-dioctanoyl-sn-glycero-3-phospho-(1D-myo-inositol-4,5-bisphosphate) is bound at residue arginine 36. Residues 62 to 88 (MQWRYKLLLFSATFAGTWFLFGVVWYL) traverse the membrane as a helical segment. Topologically, residues 89–114 (VAVAHGDLLELGPPANHTPCVVQVHT) are extracellular. An intrachain disulfide couples cysteine 108 to cysteine 140. Positions 115 to 131 (LTGAFLFSLESQTTIGY) form an intramembrane region, discontinuously helical; Pore-forming. Residues 128-133 (TIGYGF) carry the Selectivity filter motif. The Extracellular portion of the chain corresponds to 132-140 (GFRYISEEC). Residues 141-166 (PLAIVLLIAQLVLTTILEIFITGTFL) form a helical membrane-spanning segment. Topologically, residues 167-379 (AKIARPKKRA…SALSVRISNV (213 aa)) are cytoplasmic. Residues lysine 168, arginine 171, and lysine 173 each coordinate 1,2-dioctanoyl-sn-glycero-3-phospho-(1D-myo-inositol-4,5-bisphosphate). ATP is bound at residue 210–217 (GCQVTGKL).

The protein belongs to the inward rectifier-type potassium channel (TC 1.A.2.1) family. KCNJ10 subfamily. Homotetramer. In kidney cells, it forms heteromeric channels with Kir5.1/KCNJ16; this interaction is required for KCNJ16 localization to the basolateral membrane. Interacts with MAGI1, alone and possibly as a heteromer with KCNJ16; this interaction may facilitate KCNJ10/KCNJ16 potassium channel expression at the basolateral membrane in kidney cells. Interacts with PATJ. As to expression, widely expressed in adult brain, including in the neocortex, the stratum pyrimadale of the hippocampus and the piriform cortex. Expressed by cultured astrocytes and also by cocultured cortical neurons (at protein level). In the distal segment of the nephron, expressed in the distal convoluted tubule, the connecting tubule, and the early cortical collecting duct.

It localises to the membrane. It is found in the basolateral cell membrane. It carries out the reaction K(+)(in) = K(+)(out). Its activity is regulated as follows. Channel activity is strongly regulated by variations of cytosolic pH; channels are activated by alkaline and inhibited by acidic pH values. Activated by phosphatidylinositol 4,5 biphosphate (PtdIns(4,5)P2). Inhibited by Ba(2+) and Cs(+). May be responsible for potassium buffering action of glial cells in the brain. Inward rectifier potassium channels are characterized by a greater tendency to allow potassium to flow into the cell rather than out of it. Their voltage dependence is regulated by the concentration of extracellular potassium; as external potassium is raised, the voltage range of the channel opening shifts to more positive voltages. The inward rectification is mainly due to the blockage of outward current by internal magnesium. Can be blocked by extracellular barium and cesium. In the kidney, together with KCNJ16, mediates basolateral K(+) recycling in distal tubules; this process is critical for Na(+) reabsorption at the tubules. The polypeptide is ATP-sensitive inward rectifier potassium channel 10 (Mus musculus (Mouse)).